Consider the following 251-residue polypeptide: Flagellar brake protein YcgR (251 aa).

The PilZ domain occupies 127–239 (QRRDGFRVRP…ASRTLQRYID (113 aa)).

This sequence belongs to the YcgR family. Monomer. Interacts with the flagellar basal bodies.

The protein resides in the bacterial flagellum basal body. In terms of biological role, acts as a flagellar brake, regulating swimming and swarming in a bis-(3'-5') cyclic diguanylic acid (c-di-GMP)-dependent manner. Binds 1 c-di-GMP dimer per subunit. Increasing levels of c-di-GMP lead to decreased motility. In Leptothrix cholodnii (strain ATCC 51168 / LMG 8142 / SP-6) (Leptothrix discophora (strain SP-6)), this protein is Flagellar brake protein YcgR.